A 341-amino-acid polypeptide reads, in one-letter code: Anthranilate phosphoribosyltransferase (341 aa).

5-phospho-alpha-D-ribose 1-diphosphate contacts are provided by residues Gly-84, 94–97 (NVST), 112–120 (KHGGRAASS), and Ser-124. Gly-84 lines the anthranilate pocket. Ser-96 lines the Mg(2+) pocket. Arg-170 is an anthranilate binding site. Mg(2+) is bound by residues Asp-229 and Glu-230.

This sequence belongs to the anthranilate phosphoribosyltransferase family. In terms of assembly, homodimer. It depends on Mg(2+) as a cofactor.

The enzyme catalyses N-(5-phospho-beta-D-ribosyl)anthranilate + diphosphate = 5-phospho-alpha-D-ribose 1-diphosphate + anthranilate. It functions in the pathway amino-acid biosynthesis; L-tryptophan biosynthesis; L-tryptophan from chorismate: step 2/5. Its function is as follows. Catalyzes the transfer of the phosphoribosyl group of 5-phosphorylribose-1-pyrophosphate (PRPP) to anthranilate to yield N-(5'-phosphoribosyl)-anthranilate (PRA). In Methylobacillus flagellatus (strain ATCC 51484 / DSM 6875 / VKM B-1610 / KT), this protein is Anthranilate phosphoribosyltransferase.